A 435-amino-acid polypeptide reads, in one-letter code: Fez family zinc finger protein 2 (435 aa).

Positions 27–42 (SLAFSIERIMAKTSEP) match the Engrailed homology 1 repressor motif. C2H2-type zinc fingers lie at residues 254–276 (FTCE…MPVH), 282–304 (FVCK…KIIH), 310–332 (HKCN…IRIH), 338–360 (FVCE…KLTH), 366–388 (YKCT…MHTH), and 394–417 (FTCG…RKLH).

Belongs to the krueppel C2H2-type zinc-finger protein family.

It is found in the nucleus. Transcription repressor. Component of the regulatory cascade that controls the development of dopaminergic (DA) and serotonergic (5HT) neurons. The protein is Fez family zinc finger protein 2 (fezf2) of Xenopus tropicalis (Western clawed frog).